A 154-amino-acid chain; its full sequence is Transcriptional repressor NrdR (154 aa).

Residues 1–22 are disordered; that stretch reads MECPNCHKNASRVIDSRPSDEN. Residues 3–34 fold into a zinc finger; it reads CPNCHKNASRVIDSRPSDENRAIRRRRECENC. Residues 49-139 enclose the ATP-cone domain; that stretch reads LLVIKNDGTR…IYRQFKDVSG (91 aa).

It belongs to the NrdR family. Zn(2+) is required as a cofactor.

Its function is as follows. Negatively regulates transcription of bacterial ribonucleotide reductase nrd genes and operons by binding to NrdR-boxes. This chain is Transcriptional repressor NrdR, found in Lactobacillus gasseri (strain ATCC 33323 / DSM 20243 / BCRC 14619 / CIP 102991 / JCM 1131 / KCTC 3163 / NCIMB 11718 / NCTC 13722 / AM63).